Reading from the N-terminus, the 187-residue chain is UPF0200 protein PYRAB09750 (187 aa).

Gly7–Gly14 is a binding site for ATP.

This sequence belongs to the UPF0200 family.

This chain is UPF0200 protein PYRAB09750, found in Pyrococcus abyssi (strain GE5 / Orsay).